The primary structure comprises 392 residues: 1-deoxy-D-xylulose 5-phosphate reductoisomerase (392 aa).

Positions 10, 11, 12, 13, 37, 38, and 124 each coordinate NADPH. Lysine 125 contacts 1-deoxy-D-xylulose 5-phosphate. Glutamate 126 is a binding site for NADPH. Residue aspartate 150 participates in Mn(2+) binding. The 1-deoxy-D-xylulose 5-phosphate site is built by serine 151, glutamate 152, serine 179, and histidine 202. Glutamate 152 contacts Mn(2+). Residue glycine 208 coordinates NADPH. 1-deoxy-D-xylulose 5-phosphate is bound by residues serine 215, asparagine 220, lysine 221, and glutamate 224. Glutamate 224 contacts Mn(2+).

Belongs to the DXR family. It depends on Mg(2+) as a cofactor. Mn(2+) is required as a cofactor.

The enzyme catalyses 2-C-methyl-D-erythritol 4-phosphate + NADP(+) = 1-deoxy-D-xylulose 5-phosphate + NADPH + H(+). It participates in isoprenoid biosynthesis; isopentenyl diphosphate biosynthesis via DXP pathway; isopentenyl diphosphate from 1-deoxy-D-xylulose 5-phosphate: step 1/6. In terms of biological role, catalyzes the NADPH-dependent rearrangement and reduction of 1-deoxy-D-xylulose-5-phosphate (DXP) to 2-C-methyl-D-erythritol 4-phosphate (MEP). In Cupriavidus metallidurans (strain ATCC 43123 / DSM 2839 / NBRC 102507 / CH34) (Ralstonia metallidurans), this protein is 1-deoxy-D-xylulose 5-phosphate reductoisomerase.